An 865-amino-acid chain; its full sequence is Lactose regulatory protein LAC9 (865 aa).

Positions 1–15 (MGSRASNSPSFSSKA) are enriched in polar residues. Residues 1 to 87 (MGSRASNSPS…NNNNNNNKKS (87 aa)) form a disordered region. Positions 22-34 (EYKKNAVKKETIR) are enriched in basic and acidic residues. The segment covering 67 to 85 (SNGNKNDSNANNNNNNNNK) has biased composition (low complexity). Residues Cys-95, Cys-98, Cys-105, Cys-112, Cys-115, and Cys-122 each coordinate Zn(2+). Residues 95–122 (CDACRKKKWKCSKTVPTCTNCLKYNLDC) constitute a DNA-binding region (zn(2)-C6 fungal-type). The tract at residues 818–840 (LQSSTTQMRPPTTSGWPDTNNFL) is disordered.

The protein localises to the nucleus. In terms of biological role, positive regulatory protein, that controls induction of the lactose-galactose regulation of Kluyveromyces lactis. The chain is Lactose regulatory protein LAC9 (LAC9) from Kluyveromyces lactis (strain ATCC 8585 / CBS 2359 / DSM 70799 / NBRC 1267 / NRRL Y-1140 / WM37) (Yeast).